The sequence spans 466 residues: Ribulose bisphosphate carboxylase large chain (466 aa).

Lys-5 is subject to N6,N6,N6-trimethyllysine. The substrate site is built by Asn-114 and Thr-164. The active-site Proton acceptor is the Lys-166. Residue Lys-168 coordinates substrate. 3 residues coordinate Mg(2+): Lys-192, Asp-194, and Glu-195. Lys-192 carries the post-translational modification N6-carboxylysine. His-285 acts as the Proton acceptor in catalysis. 3 residues coordinate substrate: Arg-286, His-318, and Ser-370.

This sequence belongs to the RuBisCO large chain family. Type I subfamily. As to quaternary structure, heterohexadecamer of 8 large chains and 8 small chains; disulfide-linked. The disulfide link is formed within the large subunit homodimers. It depends on Mg(2+) as a cofactor. Post-translationally, the disulfide bond which can form in the large chain dimeric partners within the hexadecamer appears to be associated with oxidative stress and protein turnover.

The protein localises to the plastid. It is found in the chloroplast. It catalyses the reaction 2 (2R)-3-phosphoglycerate + 2 H(+) = D-ribulose 1,5-bisphosphate + CO2 + H2O. The catalysed reaction is D-ribulose 1,5-bisphosphate + O2 = 2-phosphoglycolate + (2R)-3-phosphoglycerate + 2 H(+). Functionally, ruBisCO catalyzes two reactions: the carboxylation of D-ribulose 1,5-bisphosphate, the primary event in carbon dioxide fixation, as well as the oxidative fragmentation of the pentose substrate in the photorespiration process. Both reactions occur simultaneously and in competition at the same active site. This chain is Ribulose bisphosphate carboxylase large chain, found in Drosera capensis (Cape sundew).